Reading from the N-terminus, the 404-residue chain is Cysteine desulfurase IscS (404 aa).

Residues 75–76 (AT), Asn155, Gln183, and 203–205 (SAH) contribute to the pyridoxal 5'-phosphate site. The residue at position 206 (Lys206) is an N6-(pyridoxal phosphate)lysine. Thr243 is a pyridoxal 5'-phosphate binding site. The active-site Cysteine persulfide intermediate is the Cys328. Residue Cys328 coordinates [2Fe-2S] cluster.

It belongs to the class-V pyridoxal-phosphate-dependent aminotransferase family. NifS/IscS subfamily. In terms of assembly, homodimer. Forms a heterotetramer with IscU, interacts with other sulfur acceptors. It depends on pyridoxal 5'-phosphate as a cofactor.

It is found in the cytoplasm. The enzyme catalyses (sulfur carrier)-H + L-cysteine = (sulfur carrier)-SH + L-alanine. Its pathway is cofactor biosynthesis; iron-sulfur cluster biosynthesis. Master enzyme that delivers sulfur to a number of partners involved in Fe-S cluster assembly, tRNA modification or cofactor biosynthesis. Catalyzes the removal of elemental sulfur atoms from cysteine to produce alanine. Functions as a sulfur delivery protein for Fe-S cluster synthesis onto IscU, an Fe-S scaffold assembly protein, as well as other S acceptor proteins. This Neisseria gonorrhoeae (strain ATCC 700825 / FA 1090) protein is Cysteine desulfurase IscS.